Reading from the N-terminus, the 543-residue chain is MTVLTHRPEWRALETHYHAICNVHLRQLFAEDPGRGERLTAEAAGLFFDYAKNRITDETLRLLIALAEACDLRARIDAMFRGERINATENRAVLHVALRAPRGAVILVDGANVVPEVHAVLDRMAAFAEQVRSGRWTGFTGKPIRNIVNIGIGGSDLGPVMAYEALRYYSDRNLTVRFVSNVDGSDFAEATRDLDPAETLFIVASKTFTTLETMTNARTARAWALAALGDEAAVARHFVAVSTNAAEVAKFGIDTANMFGFWDWVGGRYSMTSAIGLSTMIALGPERFHELLAGFHAMDEHFRTAPFDRNLPVIHGLLTIWYANFFGIETVAILPYDNYLKRFPAYLQQLTMESNGKSVTLSGAPVSYQTGMIYWGEPGTNGQHSFYQLLHQGTRLALCDFIGFAEPLNPLGNHHDLLMANMFAQAEALAFGKTTEETLAEGTPEWLAPHRTFAGNRPSNTLLAERLTPATLGALVALYEHSVFTQGAIWDINPFDQWGVELGKALAGRIVPELMSESAPHLAHDSSTNALIRRYRTLRGRVS.

The active-site Proton donor is glutamate 353. Catalysis depends on residues histidine 384 and lysine 504.

The protein belongs to the GPI family.

It localises to the cytoplasm. It carries out the reaction alpha-D-glucose 6-phosphate = beta-D-fructose 6-phosphate. It functions in the pathway carbohydrate biosynthesis; gluconeogenesis. It participates in carbohydrate degradation; glycolysis; D-glyceraldehyde 3-phosphate and glycerone phosphate from D-glucose: step 2/4. Functionally, catalyzes the reversible isomerization of glucose-6-phosphate to fructose-6-phosphate. The protein is Glucose-6-phosphate isomerase of Roseiflexus sp. (strain RS-1).